A 151-amino-acid polypeptide reads, in one-letter code: Large ribosomal subunit protein bL9 (151 aa).

It belongs to the bacterial ribosomal protein bL9 family.

In terms of biological role, binds to the 23S rRNA. In Nitrosospira multiformis (strain ATCC 25196 / NCIMB 11849 / C 71), this protein is Large ribosomal subunit protein bL9.